The chain runs to 291 residues: Acetyl-coenzyme A carboxylase carboxyl transferase subunit beta (291 aa).

Positions 23 to 291 (VWHKCPSCTA…PPDLPVEESV (269 aa)) constitute a CoA carboxyltransferase N-terminal domain. The Zn(2+) site is built by Cys27, Cys30, Cys46, and Cys49. A C4-type zinc finger spans residues 27–49 (CPSCTAVLYRVELERNLEVCPKC).

The protein belongs to the AccD/PCCB family. In terms of assembly, acetyl-CoA carboxylase is a heterohexamer composed of biotin carboxyl carrier protein (AccB), biotin carboxylase (AccC) and two subunits each of ACCase subunit alpha (AccA) and ACCase subunit beta (AccD). Zn(2+) serves as cofactor.

Its subcellular location is the cytoplasm. The catalysed reaction is N(6)-carboxybiotinyl-L-lysyl-[protein] + acetyl-CoA = N(6)-biotinyl-L-lysyl-[protein] + malonyl-CoA. Its pathway is lipid metabolism; malonyl-CoA biosynthesis; malonyl-CoA from acetyl-CoA: step 1/1. Its function is as follows. Component of the acetyl coenzyme A carboxylase (ACC) complex. Biotin carboxylase (BC) catalyzes the carboxylation of biotin on its carrier protein (BCCP) and then the CO(2) group is transferred by the transcarboxylase to acetyl-CoA to form malonyl-CoA. This Coxiella burnetii (strain Dugway 5J108-111) protein is Acetyl-coenzyme A carboxylase carboxyl transferase subunit beta.